A 72-amino-acid chain; its full sequence is Cell division protein ZapB (72 aa).

A coiled-coil region spans residues 1-71; the sequence is MSLEILDQLE…LRSLLGRIDN (71 aa). The tract at residues 36 to 56 is disordered; sequence LSRQTNEQLRSENEHLKTEHH. Basic and acidic residues predominate over residues 44 to 56; that stretch reads LRSENEHLKTEHH.

It belongs to the ZapB family. In terms of assembly, homodimer. The ends of the coiled-coil dimer bind to each other, forming polymers. Interacts with FtsZ.

It localises to the cytoplasm. Non-essential, abundant cell division factor that is required for proper Z-ring formation. It is recruited early to the divisome by direct interaction with FtsZ, stimulating Z-ring assembly and thereby promoting cell division earlier in the cell cycle. Its recruitment to the Z-ring requires functional FtsA or ZipA. This Histophilus somni (strain 129Pt) (Haemophilus somnus) protein is Cell division protein ZapB.